Reading from the N-terminus, the 299-residue chain is NAD-dependent protein deacetylase 1 (299 aa).

A Deacetylase sirtuin-type domain is found at 15-292; sequence LPPGTTDLAP…TTVADRLGLR (278 aa). Residues 39–59 and 117–120 each bind NAD(+); these read GAGI…GSLS and QNVD. H135 acts as the Proton acceptor in catalysis. Residues C143, C146, C194, and C197 each contribute to the Zn(2+) site. NAD(+) contacts are provided by residues 234 to 236 and L278; that span reads GSS.

Belongs to the sirtuin family. Class II subfamily. The cofactor is Zn(2+).

The protein resides in the cytoplasm. The enzyme catalyses N(6)-acetyl-L-lysyl-[protein] + NAD(+) + H2O = 2''-O-acetyl-ADP-D-ribose + nicotinamide + L-lysyl-[protein]. In terms of biological role, NAD-dependent protein deacetylase which modulates the activities of several enzymes which are inactive in their acetylated form. The protein is NAD-dependent protein deacetylase 1 of Streptomyces coelicolor (strain ATCC BAA-471 / A3(2) / M145).